The sequence spans 111 residues: MLNIKSDRIMTSDPQKFTVDGVRFFQQYLNKIRPDAMEIDNLIINSDIIKEDLIVHVSKMIDRLALYDLHRKRSIDKHFSAAFTVDINDREEFYSANIADVSIDLNESSGV.

This is an uncharacterized protein from Bacillus subtilis (strain 168).